Reading from the N-terminus, the 299-residue chain is Probable transport accessory protein MmpS3 (299 aa).

The disordered stretch occupies residues 1-72 (MSGPNPPGRE…EHVTGGPYVP (72 aa)). A helical membrane pass occupies residues 101 to 121 (VVGVAAIIAAVALVVSVSLLV). Residues 128–139 (KLATGDTTSSAP) are compositionally biased toward polar residues. A disordered region spans residues 128–213 (KLATGDTTSS…TTTTPTGPRQ (86 aa)). Pro residues predominate over residues 150 to 163 (PAPPPPPPAPPPTT). The span at 164-176 (EIPTATETQTVTV) shows a compositional bias: low complexity. Pro residues predominate over residues 177–193 (TPPPPPPPATTTAPPPA).

It belongs to the MmpS family.

The protein resides in the cell membrane. This chain is Probable transport accessory protein MmpS3 (mmpS3), found in Mycobacterium tuberculosis (strain CDC 1551 / Oshkosh).